The sequence spans 169 residues: Ion-translocating oxidoreductase complex subunit B (169 aa).

A hydrophobic region spans residues Met-1–Ser-23. Residues Ser-30–Lys-89 form the 4Fe-4S domain. [4Fe-4S] cluster-binding residues include Cys-47, Cys-50, Cys-55, Cys-72, Cys-116, Cys-119, Cys-122, Cys-126, Cys-146, Cys-149, Cys-152, and Cys-156. 4Fe-4S ferredoxin-type domains are found at residues Ser-107 to Asn-136 and Phe-137 to Met-166.

The protein belongs to the 4Fe4S bacterial-type ferredoxin family. RnfB subfamily. As to quaternary structure, the complex is composed of six subunits: RnfA, RnfB, RnfC, RnfD, RnfE and RnfG. [4Fe-4S] cluster is required as a cofactor.

It is found in the cell inner membrane. In terms of biological role, part of a membrane-bound complex that couples electron transfer with translocation of ions across the membrane. The chain is Ion-translocating oxidoreductase complex subunit B from Buchnera aphidicola subsp. Baizongia pistaciae (strain Bp).